The chain runs to 436 residues: 3-oxo-tetronate kinase (436 aa).

Residues S272, 372 to 375 (GGET), and G415 contribute to the ATP site.

It belongs to the four-carbon acid sugar kinase family.

The enzyme catalyses 3-dehydro-L-erythronate + ATP = 3-dehydro-4-O-phospho-L-erythronate + ADP + H(+). It carries out the reaction 3-dehydro-D-erythronate + ATP = 3-dehydro-4-O-phospho-D-erythronate + ADP + H(+). In terms of biological role, catalyzes the ATP-dependent phosphorylation of 3-oxo-tetronate to 3-oxo-tetronate 4-phosphate. The chain is 3-oxo-tetronate kinase from Brucella melitensis biotype 1 (strain ATCC 23456 / CCUG 17765 / NCTC 10094 / 16M).